We begin with the raw amino-acid sequence, 488 residues long: MESLAHLPGIFLPLAGCVLALSLTTIVYRTVTNPLSHIPGPQISKWSSLIEQYYWFAGTKVEYVDYLHRKYGPIVRVTPTEVDICDLPAVREIHRVRGGYLKSEWYKSLTPPGVTSLLTLIEPAQYSEWRRLLAGPLSDTSLGKVEPMVTNHVHATIDRIASDLQSQGVSDLYKWWTYMATDVVSELSFGEPIGLLARPKETAWVMDYLDKVGIMHAWRTTFPFVFVLGRFMPVHPFKHAIQAIGLLGKWARQSIQQYRQHIQEQPESPKPTLFTKLFKTGKFDDFQLTYLAGSYITAGSHTTAVTLLYLIYAICSDNEVRQKLLAEIRTLPENFRHDELRHLPYLNQVITETLRKYAVVSSALPRVVPAGGATLAGYYLPGGTTVSTQAYTLHRNEAIFPNPEKFDPSRWESPTQDMKDAYMPFGGASRMCIGNSLALMEIRLTTTLFLRRFPEVHMSRQNGMRDEDLAQEQYLIMAPRGQRLLVEA.

A helical transmembrane segment spans residues 7–27 (LPGIFLPLAGCVLALSLTTIV). Position 432 (C432) interacts with heme.

The protein belongs to the cytochrome P450 family. Heme is required as a cofactor.

Its subcellular location is the membrane. The protein operates within secondary metabolite biosynthesis. Functionally, cytochrome P450 monooxygenase; part of the gene cluster that mediates the biosynthesis of nigerpyrone and its derivatives carbonarone A and pestalamide A. The biosynthesis pathway begins with the polyketide assembly by epaA to form phenylacetyl triketide precursor from successive condensation of two malonyl-CoA, presumably with one phenylacetyl-CoA starter unit produced by the phenylacetyl-CoA ligase epaB. For the nigerpyrone biosynthesis, the reactive polyketide chain is released as an aldehyde through the R-domain. A nonenzymatic cyclization and dehydration may create nigerpyrone. For the biosynthesis of carbonarone A and pestalamide A, an extra methyl group is added through the C-methyltransferase domain. Several further steps involving the dehydrogenase orf1, the cytochrome P450 monooxygenase orf2 and the FAD-dependent monooxygenase orf3 are required to form a carbonarone A precursor which is converted to carbonarone A via cyclization. The O-acetyltransferase epaC could catalyze the transfer of 2-methylsuccinyl-CoA, a common intermediate in the ethylmalonyl-CoA pathway, to generate the final product pestalamide A. The chain is Cytochrome P450 monooxygenase orf2 from Aspergillus niger (strain ATCC MYA-4892 / CBS 513.88 / FGSC A1513).